We begin with the raw amino-acid sequence, 127 residues long: Small ribosomal subunit protein uS13 (127 aa).

A disordered region spans residues 92–127; sequence HRMGLPVRGQRTRTNARTRRGVRRTVAGKKKASAKK. A compositionally biased stretch (basic residues) spans 101–127; that stretch reads QRTRTNARTRRGVRRTVAGKKKASAKK.

It belongs to the universal ribosomal protein uS13 family. As to quaternary structure, part of the 30S ribosomal subunit. Forms a loose heterodimer with protein S19. Forms two bridges to the 50S subunit in the 70S ribosome.

Functionally, located at the top of the head of the 30S subunit, it contacts several helices of the 16S rRNA. In the 70S ribosome it contacts the 23S rRNA (bridge B1a) and protein L5 of the 50S subunit (bridge B1b), connecting the 2 subunits; these bridges are implicated in subunit movement. Contacts the tRNAs in the A and P-sites. This chain is Small ribosomal subunit protein uS13, found in Trichodesmium erythraeum (strain IMS101).